The chain runs to 275 residues: MQNNEIIKPAKYFSELEKSILLALVEKYKYVLECKKSDARTIALKQRTWQALAHEYNSQPSVSLRDFKQLKKCWENIKARTKKIMAHERREKVKRSVSPLLSTHVLGKEKIASMLPEQLYFLQSPPEEEPEYHPDASAQESFAVSNRELCDDEKEFIHFPVCEGTSQPEPSCSAVRITANKNYRSKTSQEGALKKMHEEEHHQQMSILQLQLIQMNEVHVAKIQQIERECEMAEEEHRIKMEVLNKKKMYWERKLQTFTKEWPVSSFNRPFPNSP.

Residues 13–78 enclose the Myb-like domain; that stretch reads FSELEKSILL…QLKKCWENIK (66 aa). A phosphoserine mark is found at Ser96 and Ser98. Residue Lys154 forms a Glycyl lysine isopeptide (Lys-Gly) (interchain with G-Cter in SUMO2) linkage. A coiled-coil region spans residues 211–247; it reads QLIQMNEVHVAKIQQIERECEMAEEEHRIKMEVLNKK. Position 274 is a phosphoserine (Ser274).

This sequence belongs to the MSANTD3 family. Expressed in brain.

The protein is Myb/SANT-like DNA-binding domain-containing protein 3 (MSANTD3) of Homo sapiens (Human).